The primary structure comprises 365 residues: Aminomethyltransferase (365 aa).

Belongs to the GcvT family. In terms of assembly, the glycine cleavage system is composed of four proteins: P, T, L and H.

It catalyses the reaction N(6)-[(R)-S(8)-aminomethyldihydrolipoyl]-L-lysyl-[protein] + (6S)-5,6,7,8-tetrahydrofolate = N(6)-[(R)-dihydrolipoyl]-L-lysyl-[protein] + (6R)-5,10-methylene-5,6,7,8-tetrahydrofolate + NH4(+). In terms of biological role, the glycine cleavage system catalyzes the degradation of glycine. The sequence is that of Aminomethyltransferase from Erwinia tasmaniensis (strain DSM 17950 / CFBP 7177 / CIP 109463 / NCPPB 4357 / Et1/99).